Here is a 213-residue protein sequence, read N- to C-terminus: Protein PAE0745 (213 aa).

Residues 8-201 (EEGTFLVRLA…EKSPGGEVYE (194 aa)) enclose the AMMECR1 domain.

The chain is Protein PAE0745 from Pyrobaculum aerophilum (strain ATCC 51768 / DSM 7523 / JCM 9630 / CIP 104966 / NBRC 100827 / IM2).